A 390-amino-acid chain; its full sequence is O-phospho-L-seryl-tRNA:Cys-tRNA synthase 2 (390 aa).

Pyridoxal 5'-phosphate-binding positions include 83 to 84 (AR), N187, and 210 to 212 (SGH). K213 is modified (N6-(pyridoxal phosphate)lysine).

The protein belongs to the SepCysS family. Homodimer. Interacts with SepRS. It depends on pyridoxal 5'-phosphate as a cofactor.

The enzyme catalyses O-phospho-L-seryl-tRNA(Cys) + hydrogen sulfide + H(+) = L-cysteinyl-tRNA(Cys) + phosphate. Converts O-phospho-L-seryl-tRNA(Cys) (Sep-tRNA(Cys)) to L-cysteinyl-tRNA(Cys) (Cys-tRNA(Cys)). In Archaeoglobus fulgidus (strain ATCC 49558 / DSM 4304 / JCM 9628 / NBRC 100126 / VC-16), this protein is O-phospho-L-seryl-tRNA:Cys-tRNA synthase 2.